Consider the following 153-residue polypeptide: Ribosomal RNA large subunit methyltransferase H (153 aa).

S-adenosyl-L-methionine is bound by residues Leu75, Gly102, and 121–126 (LSKLTL).

The protein belongs to the RNA methyltransferase RlmH family. Homodimer.

It is found in the cytoplasm. The catalysed reaction is pseudouridine(1915) in 23S rRNA + S-adenosyl-L-methionine = N(3)-methylpseudouridine(1915) in 23S rRNA + S-adenosyl-L-homocysteine + H(+). Specifically methylates the pseudouridine at position 1915 (m3Psi1915) in 23S rRNA. The protein is Ribosomal RNA large subunit methyltransferase H of Campylobacter jejuni (strain RM1221).